Consider the following 733-residue polypeptide: Protein psiM (733 aa).

Residues 1–26 form the signal peptide; it reads MKKINNNKIFVLFLTILLYLLNITTA. Residues Asn-22, Asn-65, and Asn-96 are each glycosylated (N-linked (GlcNAc...) asparagine). The Extracellular portion of the chain corresponds to 27–672; it reads QKPVSINIKI…VCQKAALVST (646 aa). Positions 114–260 constitute a PA14 domain; it reads NYDSDSGNYI…YDYCGVCNGD (147 aa). N-linked (GlcNAc...) asparagine glycosylation is found at Asn-277, Asn-336, Asn-379, Asn-428, Asn-471, Asn-537, Asn-573, and Asn-641. The chain crosses the membrane as a helical span at residues 673 to 693; that stretch reads AVIASVVVVGAVVLGAAIFAG. Over 694 to 733 the chain is Cytoplasmic; sequence KKGYDAWKTSQGNVMAASQANPLYTQSSNGGENPLYNSPT.

Belongs to the prespore-cell-inducing factor family.

The protein localises to the membrane. In Dictyostelium discoideum (Social amoeba), this protein is Protein psiM (psiM).